Here is a 234-residue protein sequence, read N- to C-terminus: Sugar fermentation stimulation protein A (234 aa).

The segment at residues 201 to 220 is a DNA-binding region (H-T-H motif); sequence LLTEAQQRGVEILAYKAEIS.

It belongs to the SfsA family.

Its function is as follows. Binds to DNA non-specifically. Could be a regulatory factor involved in maltose metabolism. The chain is Sugar fermentation stimulation protein A from Escherichia fergusonii (strain ATCC 35469 / DSM 13698 / CCUG 18766 / IAM 14443 / JCM 21226 / LMG 7866 / NBRC 102419 / NCTC 12128 / CDC 0568-73).